Consider the following 212-residue polypeptide: Pyridoxine/pyridoxamine 5'-phosphate oxidase (212 aa).

FMN is bound by residues 59-64 (RMVLMK), 74-75 (YS), Lys-81, and Gln-103. Residue Lys-64 coordinates substrate. Tyr-121 and Arg-125 together coordinate substrate. FMN-binding positions include 138 to 139 (QS) and Trp-183. 189–191 (RLH) provides a ligand contact to substrate. FMN is bound at residue Arg-193.

The protein belongs to the pyridoxamine 5'-phosphate oxidase family. As to quaternary structure, homodimer. FMN serves as cofactor.

It carries out the reaction pyridoxamine 5'-phosphate + O2 + H2O = pyridoxal 5'-phosphate + H2O2 + NH4(+). It catalyses the reaction pyridoxine 5'-phosphate + O2 = pyridoxal 5'-phosphate + H2O2. The protein operates within cofactor metabolism; pyridoxal 5'-phosphate salvage; pyridoxal 5'-phosphate from pyridoxamine 5'-phosphate: step 1/1. It functions in the pathway cofactor metabolism; pyridoxal 5'-phosphate salvage; pyridoxal 5'-phosphate from pyridoxine 5'-phosphate: step 1/1. Functionally, catalyzes the oxidation of either pyridoxine 5'-phosphate (PNP) or pyridoxamine 5'-phosphate (PMP) into pyridoxal 5'-phosphate (PLP). The chain is Pyridoxine/pyridoxamine 5'-phosphate oxidase from Rhodopseudomonas palustris (strain HaA2).